We begin with the raw amino-acid sequence, 197 residues long: Probable nicotinate-nucleotide adenylyltransferase (197 aa).

The protein belongs to the NadD family.

It catalyses the reaction nicotinate beta-D-ribonucleotide + ATP + H(+) = deamido-NAD(+) + diphosphate. Its pathway is cofactor biosynthesis; NAD(+) biosynthesis; deamido-NAD(+) from nicotinate D-ribonucleotide: step 1/1. In terms of biological role, catalyzes the reversible adenylation of nicotinate mononucleotide (NaMN) to nicotinic acid adenine dinucleotide (NaAD). The protein is Probable nicotinate-nucleotide adenylyltransferase of Neisseria meningitidis serogroup C (strain 053442).